The following is a 707-amino-acid chain: Potassium-transporting ATPase ATP-binding subunit (707 aa).

A compositionally biased stretch (basic and acidic residues) spans 1–11; it reads MNTDTQKHEDA. The tract at residues 1–37 is disordered; it reads MNTDTQKHEDAMSTTTPARAPHDDAPSGQQPGQGRVG. 4 helical membrane-spanning segments follow: residues 61 to 81, 89 to 109, 238 to 258, and 271 to 291; these read VMAK…TTAF, WFGW…NLAE, IALN…CATL, and MIVL…ALLS. The 4-aspartylphosphate intermediate role is filled by aspartate 326. ATP contacts are provided by residues aspartate 363, glutamate 367, 397-404, and lysine 415; that span reads FTAQTRMS. 2 residues coordinate Mg(2+): aspartate 542 and aspartate 546. Transmembrane regions (helical) follow at residues 612–632, 640–660, and 683–703; these read FAII…LNIM, AILS…PLAL, and LGGL…VSLI.

The protein belongs to the cation transport ATPase (P-type) (TC 3.A.3) family. Type IA subfamily. As to quaternary structure, the system is composed of three essential subunits: KdpA, KdpB and KdpC.

It localises to the cell membrane. The catalysed reaction is K(+)(out) + ATP + H2O = K(+)(in) + ADP + phosphate + H(+). Its function is as follows. Part of the high-affinity ATP-driven potassium transport (or Kdp) system, which catalyzes the hydrolysis of ATP coupled with the electrogenic transport of potassium into the cytoplasm. This subunit is responsible for energy coupling to the transport system and for the release of the potassium ions to the cytoplasm. The sequence is that of Potassium-transporting ATPase ATP-binding subunit from Streptomyces coelicolor (strain ATCC BAA-471 / A3(2) / M145).